The following is a 251-amino-acid chain: Triosephosphate isomerase (251 aa).

Position 9-11 (N9–K11) interacts with substrate. Catalysis depends on H95, which acts as the Electrophile. E167 acts as the Proton acceptor in catalysis. Substrate is bound by residues G173, S213, and G234–G235.

Belongs to the triosephosphate isomerase family. Homodimer.

The protein resides in the cytoplasm. It carries out the reaction D-glyceraldehyde 3-phosphate = dihydroxyacetone phosphate. It functions in the pathway carbohydrate biosynthesis; gluconeogenesis. Its pathway is carbohydrate degradation; glycolysis; D-glyceraldehyde 3-phosphate from glycerone phosphate: step 1/1. Functionally, involved in the gluconeogenesis. Catalyzes stereospecifically the conversion of dihydroxyacetone phosphate (DHAP) to D-glyceraldehyde-3-phosphate (G3P). In Geotalea uraniireducens (strain Rf4) (Geobacter uraniireducens), this protein is Triosephosphate isomerase.